The sequence spans 371 residues: uncharacterized protein (371 aa).

A Zn(2+)-binding site is contributed by H76. The active site involves D78. D106 provides a ligand contact to Zn(2+). E139 (proton acceptor) is an active-site residue. 3 residues coordinate Zn(2+): E140, D163, and H344.

This sequence belongs to the peptidase M20A family. It depends on Zn(2+) as a cofactor.

Its function is as follows. Could be a peptidase. This is an uncharacterized protein from Bacillus subtilis (strain 168).